A 249-amino-acid polypeptide reads, in one-letter code: Probable phosphatase VV2_1469 (249 aa).

Zn(2+) contacts are provided by histidine 8, histidine 10, histidine 16, histidine 41, glutamate 74, histidine 102, histidine 132, aspartate 194, and histidine 196.

The protein belongs to the PHP family. Requires Zn(2+) as cofactor.

This chain is Probable phosphatase VV2_1469, found in Vibrio vulnificus (strain CMCP6).